We begin with the raw amino-acid sequence, 154 residues long: MKIYEGKLTAEGLKVGIIVSRFNEFITSKLLAGSIDCLKRHGAKEDNIEVCWVPGAFEIPVIAKKMASKGKYDAVICLGAVIRGATPHFDYVSSEVSKGVAHVSLDKEVPVIFGVLTTDTIEQAIERAGTKAGNKGYDAAMSAIEMSNLMKVLD.

Residues phenylalanine 22, 56-58, and 80-82 each bind 5-amino-6-(D-ribitylamino)uracil; these read AFE and AVI. Residue 85 to 86 coordinates (2S)-2-hydroxy-3-oxobutyl phosphate; sequence AT. Histidine 88 acts as the Proton donor in catalysis. Phenylalanine 113 contributes to the 5-amino-6-(D-ribitylamino)uracil binding site. Residue arginine 127 participates in (2S)-2-hydroxy-3-oxobutyl phosphate binding.

Belongs to the DMRL synthase family.

It catalyses the reaction (2S)-2-hydroxy-3-oxobutyl phosphate + 5-amino-6-(D-ribitylamino)uracil = 6,7-dimethyl-8-(1-D-ribityl)lumazine + phosphate + 2 H2O + H(+). The protein operates within cofactor biosynthesis; riboflavin biosynthesis; riboflavin from 2-hydroxy-3-oxobutyl phosphate and 5-amino-6-(D-ribitylamino)uracil: step 1/2. Its function is as follows. Catalyzes the formation of 6,7-dimethyl-8-ribityllumazine by condensation of 5-amino-6-(D-ribitylamino)uracil with 3,4-dihydroxy-2-butanone 4-phosphate. This is the penultimate step in the biosynthesis of riboflavin. The polypeptide is 6,7-dimethyl-8-ribityllumazine synthase (Clostridium botulinum (strain Okra / Type B1)).